The sequence spans 675 residues: DNA gyrase subunit B (675 aa).

A Toprim domain is found at 453 to 567; the sequence is SELYVVEGDS…NGHIFLAQPP (115 aa). Positions 459, 532, and 534 each coordinate Mg(2+).

Belongs to the type II topoisomerase GyrB family. Heterotetramer, composed of two GyrA and two GyrB chains. In the heterotetramer, GyrA contains the active site tyrosine that forms a transient covalent intermediate with DNA, while GyrB binds cofactors and catalyzes ATP hydrolysis. Mg(2+) is required as a cofactor. Requires Mn(2+) as cofactor. The cofactor is Ca(2+).

The protein resides in the cytoplasm. The catalysed reaction is ATP-dependent breakage, passage and rejoining of double-stranded DNA.. Its activity is regulated as follows. Inhibited by 4-quinoline drugs (nalidixic acid, ciprofloxacin, ofloxacin), although it is much less sensitive than the corresponding enzyme from E.coli. GyrB intrinsic ATPase activity inhibited by aminopyrazinamide and pyrrolamide derivatives. In terms of biological role, a type II topoisomerase that negatively supercoils closed circular double-stranded (ds) DNA in an ATP-dependent manner to modulate DNA topology and maintain chromosomes in an underwound state. Negative supercoiling favors strand separation, and DNA replication, transcription, recombination and repair, all of which involve strand separation. Also able to catalyze the interconversion of other topological isomers of dsDNA rings, including catenanes and knotted rings. Type II topoisomerases break and join 2 DNA strands simultaneously in an ATP-dependent manner. This Mycolicibacterium smegmatis (strain ATCC 700084 / mc(2)155) (Mycobacterium smegmatis) protein is DNA gyrase subunit B.